A 540-amino-acid polypeptide reads, in one-letter code: Glucose-6-phosphate isomerase (540 aa).

Glutamate 350 functions as the Proton donor in the catalytic mechanism. Catalysis depends on residues histidine 381 and lysine 503.

This sequence belongs to the GPI family.

Its subcellular location is the cytoplasm. The enzyme catalyses alpha-D-glucose 6-phosphate = beta-D-fructose 6-phosphate. Its pathway is carbohydrate biosynthesis; gluconeogenesis. It participates in carbohydrate degradation; glycolysis; D-glyceraldehyde 3-phosphate and glycerone phosphate from D-glucose: step 2/4. Functionally, catalyzes the reversible isomerization of glucose-6-phosphate to fructose-6-phosphate. This is Glucose-6-phosphate isomerase from Burkholderia pseudomallei (strain 668).